We begin with the raw amino-acid sequence, 341 residues long: HTH-type transcriptional repressor PurR (341 aa).

One can recognise an HTH lacI-type domain in the interval 2–56 (ATIKDVAKRAGVSTTTVSHVINKTRFVAEETKAAVGAAIKELHYSPSAVARSLKV). The H-T-H motif DNA-binding region spans 4 to 23 (IKDVAKRAGVSTTTVSHVIN). The DNA-binding element occupies 48-56 (SAVARSLKV). Hypoxanthine is bound by residues Tyr-73, Arg-190, Thr-192, Phe-221, and Asp-275.

In terms of assembly, homodimer.

The protein operates within purine metabolism; purine nucleotide biosynthesis [regulation]. In terms of biological role, is the main repressor of the genes involved in the de novo synthesis of purine nucleotides, regulating purB, purC, purEK, purF, purHD, purL, purMN and guaBA expression. PurR is allosterically activated to bind its cognate DNA by binding the purine corepressors, hypoxanthine or guanine, thereby effecting transcription repression. The polypeptide is HTH-type transcriptional repressor PurR (Serratia proteamaculans (strain 568)).